A 459-amino-acid polypeptide reads, in one-letter code: Putrescine aminotransferase (459 aa).

Pyridoxal 5'-phosphate contacts are provided by residues 150–151 (GT) and Q274. K300 is subject to N6-(pyridoxal phosphate)lysine. A pyridoxal 5'-phosphate-binding site is contributed by T332.

This sequence belongs to the class-III pyridoxal-phosphate-dependent aminotransferase family. Putrescine aminotransferase subfamily. The cofactor is pyridoxal 5'-phosphate.

It catalyses the reaction an alkane-alpha,omega-diamine + 2-oxoglutarate = an omega-aminoaldehyde + L-glutamate. The enzyme catalyses putrescine + 2-oxoglutarate = 1-pyrroline + L-glutamate + H2O. The catalysed reaction is cadaverine + 2-oxoglutarate = 5-aminopentanal + L-glutamate. It participates in amine and polyamine degradation; putrescine degradation; 4-aminobutanal from putrescine (transaminase route): step 1/1. Its function is as follows. Catalyzes the aminotransferase reaction from putrescine to 2-oxoglutarate, leading to glutamate and 4-aminobutanal, which spontaneously cyclizes to form 1-pyrroline. This is the first step in one of two pathways for putrescine degradation, where putrescine is converted into 4-aminobutanoate (gamma-aminobutyrate or GABA) via 4-aminobutanal. Also functions as a cadaverine transaminase in a a L-lysine degradation pathway to succinate that proceeds via cadaverine, glutarate and L-2-hydroxyglutarate. The chain is Putrescine aminotransferase from Salmonella paratyphi A (strain ATCC 9150 / SARB42).